The chain runs to 185 residues: Elongation factor P (185 aa).

It belongs to the elongation factor P family.

The protein resides in the cytoplasm. The protein operates within protein biosynthesis; polypeptide chain elongation. In terms of biological role, involved in peptide bond synthesis. Stimulates efficient translation and peptide-bond synthesis on native or reconstituted 70S ribosomes in vitro. Probably functions indirectly by altering the affinity of the ribosome for aminoacyl-tRNA, thus increasing their reactivity as acceptors for peptidyl transferase. The chain is Elongation factor P from Listeria innocua serovar 6a (strain ATCC BAA-680 / CLIP 11262).